The chain runs to 133 residues: Putative esterase STK_17900 (133 aa).

Belongs to the thioesterase PaaI family.

The sequence is that of Putative esterase STK_17900 from Sulfurisphaera tokodaii (strain DSM 16993 / JCM 10545 / NBRC 100140 / 7) (Sulfolobus tokodaii).